The chain runs to 228 residues: Urease accessory protein UreF (228 aa).

This sequence belongs to the UreF family. UreD, UreF and UreG form a complex that acts as a GTP-hydrolysis-dependent molecular chaperone, activating the urease apoprotein by helping to assemble the nickel containing metallocenter of UreC. The UreE protein probably delivers the nickel.

It localises to the cytoplasm. Functionally, required for maturation of urease via the functional incorporation of the urease nickel metallocenter. In Yersinia enterocolitica serotype O:8 / biotype 1B (strain NCTC 13174 / 8081), this protein is Urease accessory protein UreF.